Reading from the N-terminus, the 211-residue chain is Thymidylate kinase (211 aa).

11–18 (GPDGAGKT) lines the ATP pocket.

This sequence belongs to the thymidylate kinase family.

It carries out the reaction dTMP + ATP = dTDP + ADP. Phosphorylation of dTMP to form dTDP in both de novo and salvage pathways of dTTP synthesis. The sequence is that of Thymidylate kinase from Streptococcus pyogenes serotype M3 (strain ATCC BAA-595 / MGAS315).